Consider the following 667-residue polypeptide: Bifunctional polymyxin resistance protein ArnA (667 aa).

The tract at residues 1-304 is formyltransferase ArnAFT; the sequence is MKAIVFAYHD…EMGIVTDVRL (304 aa). The active-site Proton donor; for formyltransferase activity is histidine 104. (6R)-10-formyltetrahydrofolate contacts are provided by residues arginine 114 and 136–140; that span reads VKKAD. Residues 314–667 are dehydrogenase ArnADH; the sequence is RRTRVLILGV…TAAPKDELNA (354 aa). NAD(+) contacts are provided by residues aspartate 347 and 368 to 369; that span reads DI. Residues alanine 393, tyrosine 398, and 432–433 contribute to the UDP-alpha-D-glucuronate site; that span reads TS. The active-site Proton acceptor; for decarboxylase activity is the glutamate 434. Residues arginine 460, asparagine 492, 526–535, and tyrosine 613 each bind UDP-alpha-D-glucuronate; that span reads KLVDGGAQKR. Arginine 619 acts as the Proton donor; for decarboxylase activity in catalysis.

This sequence in the N-terminal section; belongs to the Fmt family. UDP-L-Ara4N formyltransferase subfamily. The protein in the C-terminal section; belongs to the NAD(P)-dependent epimerase/dehydratase family. UDP-glucuronic acid decarboxylase subfamily. In terms of assembly, homohexamer, formed by a dimer of trimers.

It carries out the reaction UDP-alpha-D-glucuronate + NAD(+) = UDP-beta-L-threo-pentopyranos-4-ulose + CO2 + NADH. The enzyme catalyses UDP-4-amino-4-deoxy-beta-L-arabinose + (6R)-10-formyltetrahydrofolate = UDP-4-deoxy-4-formamido-beta-L-arabinose + (6S)-5,6,7,8-tetrahydrofolate + H(+). It participates in nucleotide-sugar biosynthesis; UDP-4-deoxy-4-formamido-beta-L-arabinose biosynthesis; UDP-4-deoxy-4-formamido-beta-L-arabinose from UDP-alpha-D-glucuronate: step 1/3. Its pathway is nucleotide-sugar biosynthesis; UDP-4-deoxy-4-formamido-beta-L-arabinose biosynthesis; UDP-4-deoxy-4-formamido-beta-L-arabinose from UDP-alpha-D-glucuronate: step 3/3. The protein operates within bacterial outer membrane biogenesis; lipopolysaccharide biosynthesis. In terms of biological role, bifunctional enzyme that catalyzes the oxidative decarboxylation of UDP-glucuronic acid (UDP-GlcUA) to UDP-4-keto-arabinose (UDP-Ara4O) and the addition of a formyl group to UDP-4-amino-4-deoxy-L-arabinose (UDP-L-Ara4N) to form UDP-L-4-formamido-arabinose (UDP-L-Ara4FN). The modified arabinose is attached to lipid A and is required for resistance to polymyxin and cationic antimicrobial peptides. The polypeptide is Bifunctional polymyxin resistance protein ArnA (Yersinia pestis bv. Antiqua (strain Antiqua)).